Reading from the N-terminus, the 197-residue chain is 7-methyl-GTP pyrophosphatase (197 aa).

Asp73 functions as the Proton acceptor in the catalytic mechanism.

The protein belongs to the Maf family. YceF subfamily. It depends on a divalent metal cation as a cofactor.

The protein resides in the cytoplasm. It carries out the reaction N(7)-methyl-GTP + H2O = N(7)-methyl-GMP + diphosphate + H(+). In terms of biological role, nucleoside triphosphate pyrophosphatase that hydrolyzes 7-methyl-GTP (m(7)GTP). May have a dual role in cell division arrest and in preventing the incorporation of modified nucleotides into cellular nucleic acids. This Alcanivorax borkumensis (strain ATCC 700651 / DSM 11573 / NCIMB 13689 / SK2) protein is 7-methyl-GTP pyrophosphatase.